The sequence spans 315 residues: Ester hydrolase C11orf54 (315 aa).

Zn(2+) is bound by residues H266, H268, and H278.

In terms of assembly, monomer. Zn(2+) is required as a cofactor.

The protein resides in the nucleus. Its subcellular location is the cytoplasm. Its function is as follows. Exhibits ester hydrolase activity on the substrate p-nitrophenyl acetate, in vitro. Regulates DNA damage and repair by regulating HIF1A degradation via chaperone-mediated autophagy (CMA). Probably non-functional. This is Ester hydrolase C11orf54 (C11orf54) from Homo sapiens (Human).